The following is a 363-amino-acid chain: Uroporphyrinogen decarboxylase (363 aa).

Substrate-binding positions include 27 to 31 (RQAGR), Asp77, Tyr157, Thr212, and His333.

Belongs to the uroporphyrinogen decarboxylase family. In terms of assembly, homodimer.

The protein localises to the cytoplasm. It carries out the reaction uroporphyrinogen III + 4 H(+) = coproporphyrinogen III + 4 CO2. Its pathway is porphyrin-containing compound metabolism; protoporphyrin-IX biosynthesis; coproporphyrinogen-III from 5-aminolevulinate: step 4/4. Its function is as follows. Catalyzes the decarboxylation of four acetate groups of uroporphyrinogen-III to yield coproporphyrinogen-III. This chain is Uroporphyrinogen decarboxylase, found in Cupriavidus necator (strain ATCC 17699 / DSM 428 / KCTC 22496 / NCIMB 10442 / H16 / Stanier 337) (Ralstonia eutropha).